Here is a 1137-residue protein sequence, read N- to C-terminus: DNA mismatch repair protein Msh3 (1137 aa).

2 stretches are compositionally biased toward low complexity: residues 31–42 (TGSLKSTSSSTG) and 51–62 (AAAAAAAAAAAA). 2 disordered regions span residues 31 to 122 (TGSL…SEPK) and 201 to 222 (SQFG…KSAN). Phosphoserine is present on S33. A compositionally biased stretch (pro residues) spans 63 to 76 (PPAPPAPAFPPQLP). An interaction with EXO1 region spans residues 75-297 (LPPHIATEID…HRLFVHVRRL (223 aa)). Positions 81–97 (TEIDRRKKRPLENDGPV) are enriched in basic and acidic residues. Polar residues predominate over residues 201–220 (SQFGSSNTSHENLQKTASKS). Position 896–903 (896–903 (GPNMGGKS)) interacts with ATP. T1099 bears the Phosphothreonine mark.

Belongs to the DNA mismatch repair MutS family. MSH3 subfamily. In terms of assembly, component of the DNA mismatch repair (MMR) complex composed at least of MSH2, MSH3, MSH6, PMS1 and MLH1. Heterodimer consisting of MSH2-MSH3 (MutS beta). Forms a ternary complex with MutL alpha (MLH1-PMS1). Interacts with EXO1. Interacts with MCM9.

In terms of biological role, component of the post-replicative DNA mismatch repair system (MMR). Heterodimerizes with MSH2 to form MutS beta which binds to DNA mismatches thereby initiating DNA repair. When bound, the MutS beta heterodimer bends the DNA helix and shields approximately 20 base pairs. MutS beta recognizes large insertion-deletion loops (IDL) up to 13 nucleotides long. After mismatch binding, forms a ternary complex with the MutL alpha heterodimer, which is thought to be responsible for directing the downstream MMR events, including strand discrimination, excision, and resynthesis. This is DNA mismatch repair protein Msh3 (MSH3) from Homo sapiens (Human).